Here is a 122-residue protein sequence, read N- to C-terminus: Large ribosomal subunit protein uL14 (122 aa).

This sequence belongs to the universal ribosomal protein uL14 family. Part of the 50S ribosomal subunit. Forms a cluster with proteins L3 and L19. In the 70S ribosome, L14 and L19 interact and together make contacts with the 16S rRNA in bridges B5 and B8.

Binds to 23S rRNA. Forms part of two intersubunit bridges in the 70S ribosome. The polypeptide is Large ribosomal subunit protein uL14 (Pseudomonas entomophila (strain L48)).